The sequence spans 436 residues: Adenylosuccinate synthetase (436 aa).

Residues Gly12–Lys18 and Gly40–Thr42 contribute to the GTP site. The Proton acceptor role is filled by Asp13. Mg(2+)-binding residues include Asp13 and Gly40. Residues Asp13 to Lys16, Asn38 to His41, Thr128, Arg142, Gln223, Thr238, and Arg302 each bind IMP. The Proton donor role is filled by His41. Thr298–Arg304 contributes to the substrate binding site. Residues Arg304, Lys330–Asp332, and Ser412–Gly414 each bind GTP.

This sequence belongs to the adenylosuccinate synthetase family. In terms of assembly, homodimer. The cofactor is Mg(2+).

It localises to the cytoplasm. It carries out the reaction IMP + L-aspartate + GTP = N(6)-(1,2-dicarboxyethyl)-AMP + GDP + phosphate + 2 H(+). It participates in purine metabolism; AMP biosynthesis via de novo pathway; AMP from IMP: step 1/2. Plays an important role in the de novo pathway of purine nucleotide biosynthesis. Catalyzes the first committed step in the biosynthesis of AMP from IMP. This is Adenylosuccinate synthetase from Prochlorococcus marinus (strain MIT 9301).